Consider the following 102-residue polypeptide: Small ribosomal subunit protein uS10 (102 aa).

It belongs to the universal ribosomal protein uS10 family. As to quaternary structure, part of the 30S ribosomal subunit.

Involved in the binding of tRNA to the ribosomes. The chain is Small ribosomal subunit protein uS10 from Pediococcus pentosaceus (strain ATCC 25745 / CCUG 21536 / LMG 10740 / 183-1w).